We begin with the raw amino-acid sequence, 94 residues long: MSFESNEYFDGNVKSIAFQSATLPGTLGVMDIGEYTFDTNAYEFMTVVNGALTVKLPGATDWKTFNAGETFEVEANVSFDVKVKVQTAYLCLYK.

The protein belongs to the nucleoside phosphorylase PpnP family.

It carries out the reaction a purine D-ribonucleoside + phosphate = a purine nucleobase + alpha-D-ribose 1-phosphate. The catalysed reaction is adenosine + phosphate = alpha-D-ribose 1-phosphate + adenine. It catalyses the reaction cytidine + phosphate = cytosine + alpha-D-ribose 1-phosphate. The enzyme catalyses guanosine + phosphate = alpha-D-ribose 1-phosphate + guanine. It carries out the reaction inosine + phosphate = alpha-D-ribose 1-phosphate + hypoxanthine. The catalysed reaction is thymidine + phosphate = 2-deoxy-alpha-D-ribose 1-phosphate + thymine. It catalyses the reaction uridine + phosphate = alpha-D-ribose 1-phosphate + uracil. The enzyme catalyses xanthosine + phosphate = alpha-D-ribose 1-phosphate + xanthine. Its function is as follows. Catalyzes the phosphorolysis of diverse nucleosides, yielding D-ribose 1-phosphate and the respective free bases. Can use uridine, adenosine, guanosine, cytidine, thymidine, inosine and xanthosine as substrates. Also catalyzes the reverse reactions. This Psychromonas ingrahamii (strain DSM 17664 / CCUG 51855 / 37) protein is Pyrimidine/purine nucleoside phosphorylase.